The following is a 330-amino-acid chain: (11Z)-hexadec-11-enoyl-CoA conjugase (330 aa).

The next 2 membrane-spanning stretches (helical) occupy residues 37–57 and 65–85; these read IVVM…YGLY and LATS…ITAG. Residues 87 to 92 carry the Histidine box-1 motif; that stretch reads HRLWSH. A helical membrane pass occupies residues 101–121; the sequence is LEILLMVFNSIAFQNTIFTWV. The Histidine box-2 signature appears at 124–128; sequence HRLHH. The next 2 helical transmembrane spans lie at 185–205 and 216–238; these read AIPF…MYFW and TVLR…HLWG. The Histidine box-3 motif lies at 264–268; it reads HNYHH.

It belongs to the fatty acid desaturase type 1 family. It depends on Fe(2+) as a cofactor. Highly expressed in the pheromone gland.

It localises to the membrane. The catalysed reaction is an 11,12-saturated fatty acyl-CoA + 2 Fe(II)-[cytochrome b5] + O2 + 2 H(+) = an (11Z)-Delta(11)-fatty acyl-CoA + 2 Fe(III)-[cytochrome b5] + 2 H2O. It catalyses the reaction (11Z)-hexadecenoyl-CoA + AH2 + O2 = (10E,12Z)-hexadecadienoyl-CoA + A + 2 H2O. Its function is as follows. Fatty acid desaturase that catalyzes 2 consecutive steps in the biosynthesis of bombykol, a sex pheromone produced by the moth. First acts as an acyl-CoA Delta(11) desaturase (1) by catalyzing the formation of Delta(11) fatty acyl precursors. Then acts as a (11Z)-hexadec-11-enoyl-CoA conjugase (2) by converting a single cis double bond at position 11 of (11Z)-hexadec-11-enoyl-CoA into conjugated 10 trans and 12 cis double bonds. The protein is (11Z)-hexadec-11-enoyl-CoA conjugase of Bombyx mori (Silk moth).